The following is a 366-amino-acid chain: Phospho-N-acetylmuramoyl-pentapeptide-transferase (366 aa).

The next 10 membrane-spanning stretches (helical) occupy residues 3 to 23 (QIII…PVLI), 52 to 72 (MGGI…GIVG), 80 to 100 (LTAS…LGFA), 120 to 140 (LIGQ…FPNA), 161 to 181 (LAIG…YILI), 197 to 217 (LAAG…FWQF), 238 to 258 (LAIL…WNAA), 262 to 282 (IFMG…LSVA), 287 to 307 (LLMI…VIQV), and 341 to 361 (FWLI…GEWL).

It belongs to the glycosyltransferase 4 family. MraY subfamily. The cofactor is Mg(2+).

It is found in the cell membrane. The catalysed reaction is UDP-N-acetyl-alpha-D-muramoyl-L-alanyl-gamma-D-glutamyl-meso-2,6-diaminopimeloyl-D-alanyl-D-alanine + di-trans,octa-cis-undecaprenyl phosphate = di-trans,octa-cis-undecaprenyl diphospho-N-acetyl-alpha-D-muramoyl-L-alanyl-D-glutamyl-meso-2,6-diaminopimeloyl-D-alanyl-D-alanine + UMP. It participates in cell wall biogenesis; peptidoglycan biosynthesis. Its function is as follows. Catalyzes the initial step of the lipid cycle reactions in the biosynthesis of the cell wall peptidoglycan: transfers peptidoglycan precursor phospho-MurNAc-pentapeptide from UDP-MurNAc-pentapeptide onto the lipid carrier undecaprenyl phosphate, yielding undecaprenyl-pyrophosphoryl-MurNAc-pentapeptide, known as lipid I. The chain is Phospho-N-acetylmuramoyl-pentapeptide-transferase from Corynebacterium diphtheriae (strain ATCC 700971 / NCTC 13129 / Biotype gravis).